We begin with the raw amino-acid sequence, 384 residues long: MLHRIPAFLRPRPFSGLPLSCGNRDVSVAVLPAAQSGAVRTENNIQRHFCTSRSICSKKVDQSVPANEISQKAAESQGRGKETLKKDLLDIIKDMKVDLSTANVKTPKPRGRKPSASLEATVDRLQKAPEDPPKKRNEFLSPELVAAASAVADSLPFDKQTTKSELLRQLQQHEEELRAQKDREKRRISFTHIISNMKIAKSPSGRASTRPQHQIQFDEDMDSSLKQEKPTDFRKRKYLFKGKRLSIFADKAFADEPPEPEASPSLWEIEFAKQLASVADQPFENGFEEMIQWTKEGKLWEFPVNNEAGLDDDGSEFHEHIFLDKYLEDFPKQGPIRLFMELVTCGLSKNPYLSVKQKVEHIEWFRNYFNEKRDILKENNIAFT.

A mitochondrion-targeting transit peptide spans 1–54; it reads MLHRIPAFLRPRPFSGLPLSCGNRDVSVAVLPAAQSGAVRTENNIQRHFCTSRS. The interval 101 to 136 is disordered; the sequence is TANVKTPKPRGRKPSASLEATVDRLQKAPEDPPKKR. Positions 121-136 are enriched in basic and acidic residues; that stretch reads TVDRLQKAPEDPPKKR.

It belongs to the mitochondrion-specific ribosomal protein mS31 family. As to quaternary structure, component of the mitochondrial ribosome small subunit (28S) which comprises a 12S rRNA and about 30 distinct proteins.

It localises to the mitochondrion. This chain is Small ribosomal subunit protein mS31 (Mrps31), found in Mus musculus (Mouse).